We begin with the raw amino-acid sequence, 196 residues long: MPSGNLWKVLGLCLLSVGAWGQEDIERPDEDTQKTFKVSISGDKVELTCPEDPESEKMTWKRNDMQIYESYDNYMLLESFSEVENSGYYTCTVGEKTSHRLYLKARVCENCVEVDLMAVVTIIVVDICITLGLLMVVYYYSKSRKAKAMPVTRGAGAGGRPRGQNRERPPPVPNPDYEPIRKGQRDLYSGLNQRGR.

The signal sequence occupies residues 1–21 (MPSGNLWKVLGLCLLSVGAWG). Residues 22-116 (QEDIERPDED…VCENCVEVDL (95 aa)) are Extracellular-facing. In terms of domain architecture, Ig-like spans 28-102 (PDEDTQKTFK…VGEKTSHRLY (75 aa)). Cys-49 and Cys-91 are disulfide-bonded. The chain crosses the membrane as a helical span at residues 117–137 (MAVVTIIVVDICITLGLLMVV). The Cytoplasmic portion of the chain corresponds to 138-196 (YYYSKSRKAKAMPVTRGAGAGGRPRGQNRERPPPVPNPDYEPIRKGQRDLYSGLNQRGR). Positions 150–196 (PVTRGAGAGGRPRGQNRERPPPVPNPDYEPIRKGQRDLYSGLNQRGR) are disordered. Positions 164-181 (QNRERPPPVPNPDYEPIR) are NUMB-binding region. The ITAM domain maps to 167-194 (ERPPPVPNPDYEPIRKGQRDLYSGLNQR). The segment at 168–175 (RPPPVPNP) is proline-rich sequence. Residues Tyr-177 and Tyr-188 each carry the phosphotyrosine modification.

The TCR-CD3 complex is composed of a CD3D/CD3E and a CD3G/CD3E heterodimers that preferentially associate with TCRalpha and TCRbeta, respectively, to form TCRalpha/CD3E/CD3G and TCRbeta/CD3G/CD3E trimers. In turn, the hexamer interacts with CD3Z homodimer to form the TCR-CD3 complex. Alternatively, TCRalpha and TCRbeta can be replaced by TCRgamma and TCRdelta. Interacts with CD6. Interacts (via Proline-rich sequence) with NCK1; the interaction is ligand dependent but independent of tyrosine kinase activation. In terms of processing, phosphorylated on Tyr residues after T-cell receptor triggering by LCK in association with CD4/CD8.

The protein localises to the cell membrane. In terms of biological role, part of the TCR-CD3 complex present on T-lymphocyte cell surface that plays an essential role in adaptive immune response. When antigen presenting cells (APCs) activate T-cell receptor (TCR), TCR-mediated signals are transmitted across the cell membrane by the CD3 chains CD3D, CD3E, CD3G and CD3Z. All CD3 chains contain immunoreceptor tyrosine-based activation motifs (ITAMs) in their cytoplasmic domain. Upon TCR engagement, these motifs become phosphorylated by Src family protein tyrosine kinases LCK and FYN, resulting in the activation of downstream signaling pathways. In addition of this role of signal transduction in T-cell activation, CD3E plays an essential role in correct T-cell development. Also participates in internalization and cell surface down-regulation of TCR-CD3 complexes via endocytosis sequences present in CD3E cytosolic region. In addition to its role as a TCR coreceptor, it serves as a receptor for ITPRIPL1. Ligand recognition inhibits T-cell activation by promoting interaction with NCK1, which prevents CD3E-ZAP70 interaction and blocks the ERK-NFkB signaling cascade and calcium influx. The polypeptide is T-cell surface glycoprotein CD3 epsilon chain (CD3E) (Sus scrofa (Pig)).